The chain runs to 1029 residues: MKMADAKQKRNEQLKRWIGSETDLEPPVVKRQKTKVKFDDGAVFLAACSSGDTDEVLKLLHRGADINYANVDGLTALHQACIDDNVDMVKFLVENGANINQPDNEGWIPLHAAASCGYLDIAEFLIGQGAHVGAVNSEGDTPLDIAEEEAMEELLQNEVNRQGVDIEAARKEEERVMLRDARQWLNSGHISDVRHAKSGGTALHVAAAKGYTEVLKLLIQAGYDVNIKDYDGWTPLHAAAHWGKEEACRILVDNLCDMETVNKVGQTAFDVADEDILGYLEELQKKQTLLHSEKRDKKSPLIESTANMENNQPQKAFKNKETLIIEPEKNASRIESLEHEKADEEEEGKKDESSCSSEEDEEDDSESEAETDKTKPMASVSNAHTSSTQAAPAAVTAPTLSSNQGTPTSPVKKFPISTTKISPKEEERKDESPASWRLGLRKTGSYGALAEISASKEAQKEKDTAGVMRSASSPRLSSSLDNKEKEKDNKGTRLAYVTPTIPRRLASTSDIEEKENRESSSLRTSSSYTRRKWEDDLKKNSSINEGSTYHRSCSFGRRQDDLISCSVPSTTSTPTVTSAAGLQRSLPSSTSTAAKTPPGSSSAGTQSSTSNRLWAEDSTEKEKDSAPTAVTIPVAPTVVNAAAPSTTTLTTTTAGTVSEVRERRRSYLTPVRDEESESQRKARSRQARQSRRSTQGVTLTDLQEAEKTIGRSRSTRTREQENEEKEKEEKEKQDKEKQEEKKESEASREDEYKQKYSRTYDETYTRYRPVSTSSSSAPSSSSLSTLGSTLYASSQLNRPNSLVGITSAYSRGLAKENEREGEKKEEEKEGEDKSQPKSIRERRRPREKRRSTGVSFWTQDSDENEQERQSDTEDGSSKRETQTDSVSRYDSSSTSSSDRYDSLLGRSASYSYLEDRKPYSSRLEKDDSTDFKKLYEQILAENEKLKAQLHDTNMELTDLKLQLEKATQRQERFADRSQLEMEKRERRALERRISEMEEELKMLPDLKADNQRLKDENGALIRVISKLSK.

A KVKF motif motif is present at residues 35–38 (KVKF). ANK repeat units lie at residues 39-68 (DDGA…DINY), 72-101 (DGLT…NINQ), 105-134 (EGWI…HVGA), 138-164 (EGDT…RQGV), 198-227 (SGGT…DVNI), and 231-260 (DGWT…DMET). Asn67 and Asn100 each carry (3S)-3-hydroxyasparagine; by HIF1AN. Asn226 is modified ((3S)-3-hydroxyasparagine; by HIF1AN). Residues 290–786 (LHSEKRDKKS…APSSSSLSTL (497 aa)) are disordered. Over residues 291–300 (HSEKRDKKSP) the composition is skewed to basic and acidic residues. Ser299 bears the Phosphoserine mark. The span at 302 to 314 (IESTANMENNQPQ) shows a compositional bias: polar residues. Residues 318–353 (KNKETLIIEPEKNASRIESLEHEKADEEEEGKKDES) show a composition bias toward basic and acidic residues. Residues 357–369 (SEEDEEDDSESEA) are compositionally biased toward acidic residues. The segment covering 385–402 (TSSTQAAPAAVTAPTLSS) has biased composition (low complexity). 2 positions are modified to phosphoserine: Ser422 and Ser432. Residues 422-432 (SPKEEERKDES) are compositionally biased toward basic and acidic residues. At Thr443 the chain carries Phosphothreonine. Phosphoserine; by NUAK1 is present on Ser445. A Phosphotyrosine modification is found at Tyr446. Low complexity predominate over residues 469 to 480 (RSASSPRLSSSL). Ser472 is modified (phosphoserine; by NUAK1). Ser473 carries the post-translational modification Phosphoserine; by CDK1. Phosphoserine is present on Ser477. Basic and acidic residues predominate over residues 481-491 (DNKEKEKDNKG). Phosphoserine is present on residues Ser507 and Ser509. The segment covering 540-551 (NSSINEGSTYHR) has biased composition (polar residues). A compositionally biased stretch (low complexity) spans 564–578 (SCSVPSTTSTPTVTS). Over residues 585–594 (SLPSSTSTAA) the composition is skewed to polar residues. Residues 596-610 (TPPGSSSAGTQSSTS) are compositionally biased toward low complexity. Residues Ser601 and Ser618 each carry the phosphoserine modification. A compositionally biased stretch (basic and acidic residues) spans 614–625 (WAEDSTEKEKDS). The span at 626-656 (APTAVTIPVAPTVVNAAAPSTTTLTTTTAGT) shows a compositional bias: low complexity. Positions 671-680 (VRDEESESQR) are enriched in basic and acidic residues. The interval 680-863 (RKARSRQARQ…VSFWTQDSDE (184 aa)) is interaction with ROCK2. Residues 681-691 (KARSRQARQSR) show a composition bias toward basic residues. Phosphoserine; by PKA and PKG; in vitro occurs at positions 690 and 693. Thr694 bears the Phosphothreonine; by ROCK1, ROCK2, CDC42BP, ZIPK/DAPK3 and RAF1 mark. Residues 716–765 (RTREQENEEKEKEEKEKQDKEKQEEKKESEASREDEYKQKYSRTYDETYT) are compositionally biased toward basic and acidic residues. Over residues 771–786 (STSSSSAPSSSSLSTL) the composition is skewed to low complexity. Ser801 is subject to Phosphoserine. The disordered stretch occupies residues 808-927 (AYSRGLAKEN…PYSSRLEKDD (120 aa)). Over residues 813 to 839 (LAKENEREGEKKEEEKEGEDKSQPKSI) the composition is skewed to basic and acidic residues. Residues 840–851 (RERRRPREKRRS) show a composition bias toward basic residues. Phosphoserine; by ROCK2 is present on Ser851. Ser861 and Ser870 each carry phosphoserine. Basic and acidic residues predominate over residues 866 to 882 (QERQSDTEDGSSKRETQ). The segment covering 883-897 (TDSVSRYDSSSTSSS) has biased composition (low complexity). Phosphoserine occurs at positions 902 and 907. A Phosphoserine; by NUAK1 modification is found at Ser909. The segment covering 913-927 (LEDRKPYSSRLEKDD) has biased composition (basic and acidic residues). Position 994 is a phosphoserine (Ser994).

PP1 comprises a catalytic subunit, PPP1CA, PPP1CB or PPP1CC, and one or several targeting or regulatory subunits. PPP1R12A mediates binding to myosin. Interacts with ARHA and CIT. Binds PPP1R12B, ROCK1 and IL16. Interacts directly with PRKG1. Non-covalent dimer of 2 dimers; PRKG1-PRKG1 and PPP1R12A-PPP1R12A. Interacts with SMTNL1. Interacts with PPP1CB; the interaction is direct. Interacts (when phosphorylated at Ser-445, Ser-472 and Ser-910) with 14-3-3. Interacts with ROCK1 and ROCK2. Interacts with isoform 1 and isoform 2 of ZIPK/DAPK3. Interacts with RAF1. Interacts with HIF1AN. Interacts with NCKAP1L. Phosphorylated by CIT (Rho-associated kinase). Phosphorylated cooperatively by ROCK1 and CDC42BP on Thr-694. Phosphorylated on upon DNA damage, probably by ATM or ATR. In vitro, phosphorylation of Ser-693 by PKA and PKG appears to prevent phosphorylation of the inhibitory site Thr-694, probably mediated by PRKG1. Phosphorylation at Ser-445, Ser-472 and Ser-909 by NUAK1 promotes interaction with 14-3-3, leading to inhibit interaction with myosin light chain MLC2, preventing dephosphorylation of MLC2. May be phosphorylated at Thr-694 by DMPK; may inhibit the myosin phosphatase activity. Phosphorylated at Ser-473 by CDK1 during mitosis, creating docking sites for the POLO box domains of PLK1. Subsequently, PLK1 binds and phosphorylates PPP1R12A. Expressed in striated and vascular smooth muscle, specificcally in type 2a fibers (at protein level). Expression levels are 20-30% higher in developed males than females (at protein level).

It is found in the cytoplasm. Its subcellular location is the cytoskeleton. The protein resides in the stress fiber. Key regulator of protein phosphatase 1C (PPP1C). Mediates binding to myosin. As part of the PPP1C complex, involved in dephosphorylation of PLK1. Capable of inhibiting HIF1AN-dependent suppression of HIF1A activity. The sequence is that of Protein phosphatase 1 regulatory subunit 12A from Mus musculus (Mouse).